Reading from the N-terminus, the 258-residue chain is Shikimate dehydrogenase (NADP(+)) (258 aa).

Residues 14 to 16 (SES) and Thr61 each bind shikimate. The active-site Proton acceptor is the Lys65. Asn86 and Asp101 together coordinate shikimate. NADP(+)-binding positions include 125-129 (GSGGS) and Leu211. Tyr213 is a shikimate binding site. Position 234 (Gly234) interacts with NADP(+).

This sequence belongs to the shikimate dehydrogenase family. In terms of assembly, homodimer.

The enzyme catalyses shikimate + NADP(+) = 3-dehydroshikimate + NADPH + H(+). Its pathway is metabolic intermediate biosynthesis; chorismate biosynthesis; chorismate from D-erythrose 4-phosphate and phosphoenolpyruvate: step 4/7. Involved in the biosynthesis of the chorismate, which leads to the biosynthesis of aromatic amino acids. Catalyzes the reversible NADPH linked reduction of 3-dehydroshikimate (DHSA) to yield shikimate (SA). This is Shikimate dehydrogenase (NADP(+)) from Clostridium botulinum (strain Loch Maree / Type A3).